The sequence spans 470 residues: Ribulose bisphosphate carboxylase large chain (470 aa).

Substrate-binding residues include Asn-118 and Thr-168. Catalysis depends on Lys-170, which acts as the Proton acceptor. Lys-172 lines the substrate pocket. The Mg(2+) site is built by Lys-196, Asp-198, and Glu-199. Lys-196 is modified (N6-carboxylysine). His-289 serves as the catalytic Proton acceptor. Positions 290, 322, and 374 each coordinate substrate. The Interacts with RbcX2 signature appears at 459-465 (EIKFEFD).

The protein belongs to the RuBisCO large chain family. Type I subfamily. Heterohexadecamer of 8 large chains and 8 small chains; disulfide-linked. The disulfide link is formed within the large subunit homodimers. Requires Mg(2+) as cofactor. In terms of processing, the disulfide bond which can form in the large chain dimeric partners within the hexadecamer appears to be associated with oxidative stress and protein turnover.

The protein resides in the carboxysome. The catalysed reaction is 2 (2R)-3-phosphoglycerate + 2 H(+) = D-ribulose 1,5-bisphosphate + CO2 + H2O. It carries out the reaction D-ribulose 1,5-bisphosphate + O2 = 2-phosphoglycolate + (2R)-3-phosphoglycerate + 2 H(+). Its function is as follows. RuBisCO catalyzes two reactions: the carboxylation of D-ribulose 1,5-bisphosphate, the primary event in carbon dioxide fixation, as well as the oxidative fragmentation of the pentose substrate in the photorespiration process. Both reactions occur simultaneously and in competition at the same active site. This is Ribulose bisphosphate carboxylase large chain from Picosynechococcus sp. (strain ATCC 27264 / PCC 7002 / PR-6) (Agmenellum quadruplicatum).